Reading from the N-terminus, the 450-residue chain is Ribulose bisphosphate carboxylase large chain (450 aa).

Lys-4 bears the N6,N6,N6-trimethyllysine mark. Asn-113 and Thr-163 together coordinate substrate. Lys-165 serves as the catalytic Proton acceptor. Lys-167 is a substrate binding site. Mg(2+)-binding residues include Lys-191, Asp-193, and Glu-194. An N6-carboxylysine modification is found at Lys-191. His-284 functions as the Proton acceptor in the catalytic mechanism. Residues Arg-285, His-317, and Ser-369 each contribute to the substrate site.

The protein belongs to the RuBisCO large chain family. Type I subfamily. In terms of assembly, heterohexadecamer of 8 large chains and 8 small chains; disulfide-linked. The disulfide link is formed within the large subunit homodimers. The cofactor is Mg(2+). In terms of processing, the disulfide bond which can form in the large chain dimeric partners within the hexadecamer appears to be associated with oxidative stress and protein turnover.

Its subcellular location is the plastid. It is found in the chloroplast. It carries out the reaction 2 (2R)-3-phosphoglycerate + 2 H(+) = D-ribulose 1,5-bisphosphate + CO2 + H2O. The catalysed reaction is D-ribulose 1,5-bisphosphate + O2 = 2-phosphoglycolate + (2R)-3-phosphoglycerate + 2 H(+). In terms of biological role, ruBisCO catalyzes two reactions: the carboxylation of D-ribulose 1,5-bisphosphate, the primary event in carbon dioxide fixation, as well as the oxidative fragmentation of the pentose substrate in the photorespiration process. Both reactions occur simultaneously and in competition at the same active site. In Sedum rubrotinctum (Jelly bean plant), this protein is Ribulose bisphosphate carboxylase large chain.